The primary structure comprises 469 residues: Probable multidrug resistance protein NorM (469 aa).

12 helical membrane passes run 10 to 30 (IALF…GSEV), 34 to 54 (LLLA…GFVL), 74 to 94 (ALLW…TVLV), 121 to 141 (GLVM…FGIV), 179 to 199 (FPTM…SYAL), 214 to 234 (LGIA…LYLW), 264 to 284 (LPIG…TLLI), 292 to 312 (IAAH…PMGV), 335 to 355 (VAWA…SVLL), 369 to 389 (LVVA…QFPD), 409 to 429 (MLLA…GLGF), and 437 to 457 (GMWI…GWRF).

It belongs to the multi antimicrobial extrusion (MATE) (TC 2.A.66.1) family.

The protein resides in the cell inner membrane. Multidrug efflux pump. The protein is Probable multidrug resistance protein NorM (norM) of Xylella fastidiosa (strain 9a5c).